The following is a 707-amino-acid chain: Leucine-rich repeat neuronal protein 3 (707 aa).

Positions 1–22 (MKDTPLQVHVLLGLAITTLVQA) are cleaved as a signal peptide. Residues 23-69 (IDKKVDCPQLCTCEIRPWFTPRSIYMEASTVDCNDLGLLNFPARLPA) enclose the LRRNT domain. The Extracellular portion of the chain corresponds to 23 to 626 (IDKKVDCPQL…DGKEYGKNHT (604 aa)). 12 LRR repeats span residues 70–91 (DTQI…TDFP), 93–114 (NLTG…NVQK), 117–138 (QLLS…CLYG), 141–162 (NLQE…AFIG), 165–186 (NLLR…WFDA), 189–210 (NLEI…NFQP), 213–234 (KLRS…ALAG), 237–258 (NLES…ALQK), 261–282 (NLKF…DFSN), 285–304 (HLKE…DSLA), 310–332 (DLRK…AFFR), and 335–358 (KLES…ESLP). N-linked (GlcNAc...) asparagine glycosylation is found at asparagine 93 and asparagine 103. Asparagine 223 carries N-linked (GlcNAc...) asparagine glycosylation. The LRRCT domain maps to 368–421 (NPIRCDCVIRWINMNKTNIRFMEPDSLFCVDPPEFQGQNVRQVHFRDMMEICLP). Asparagine 382 carries N-linked (GlcNAc...) asparagine glycosylation. An Ig-like C2-type domain is found at 421 to 514 (PLIAPESFPS…DLKSIMIKVG (94 aa)). Cysteine 444 and cysteine 496 are joined by a disulfide. Residues asparagine 522, asparagine 579, asparagine 608, and asparagine 624 are each glycosylated (N-linked (GlcNAc...) asparagine). In terms of domain architecture, Fibronectin type-III spans 523–614 (GSLNIKIRDI…QCVNVTTKSL (92 aa)). The helical transmembrane segment at 627–647 (VFVACVGGLLGIIGVMCLFSC) threads the bilayer. The Cytoplasmic portion of the chain corresponds to 648-707 (VSQEGSSEGEHSYAVNHCHKPALAFSELYPPLINLWESSKEKRATLEVKATAIGVPTNMS).

In terms of tissue distribution, expressed in the brain, in Stronger expression in the ventricular zone and anlage of thalamus, spinal cord, and dorsal root ganglion in 11-17 dpc cerebellum and cerebral cortex in adults.

Its subcellular location is the membrane. The chain is Leucine-rich repeat neuronal protein 3 (Lrrn3) from Mus musculus (Mouse).